The primary structure comprises 291 residues: Pantothenate synthetase 1 (291 aa).

Catalysis depends on His-37, which acts as the Proton donor. ATP is bound at residue Gly-147–Asp-150. Gln-153 contributes to the (R)-pantoate binding site. Position 184-187 (Ile-184–Arg-187) interacts with ATP.

Belongs to the pantothenate synthetase family. Homodimer.

It is found in the cytoplasm. It catalyses the reaction (R)-pantoate + beta-alanine + ATP = (R)-pantothenate + AMP + diphosphate + H(+). Its pathway is cofactor biosynthesis; (R)-pantothenate biosynthesis; (R)-pantothenate from (R)-pantoate and beta-alanine: step 1/1. Functionally, catalyzes the condensation of pantoate with beta-alanine in an ATP-dependent reaction via a pantoyl-adenylate intermediate. The protein is Pantothenate synthetase 1 of Frankia alni (strain DSM 45986 / CECT 9034 / ACN14a).